We begin with the raw amino-acid sequence, 509 residues long: ATP synthase subunit alpha (509 aa).

Residue 169–176 (GDRQTGKT) participates in ATP binding.

This sequence belongs to the ATPase alpha/beta chains family. F-type ATPases have 2 components, CF(1) - the catalytic core - and CF(0) - the membrane proton channel. CF(1) has five subunits: alpha(3), beta(3), gamma(1), delta(1), epsilon(1). CF(0) has three main subunits: a(1), b(2) and c(9-12). The alpha and beta chains form an alternating ring which encloses part of the gamma chain. CF(1) is attached to CF(0) by a central stalk formed by the gamma and epsilon chains, while a peripheral stalk is formed by the delta and b chains.

The protein localises to the cell inner membrane. The enzyme catalyses ATP + H2O + 4 H(+)(in) = ADP + phosphate + 5 H(+)(out). Functionally, produces ATP from ADP in the presence of a proton gradient across the membrane. The alpha chain is a regulatory subunit. This chain is ATP synthase subunit alpha, found in Methylocella silvestris (strain DSM 15510 / CIP 108128 / LMG 27833 / NCIMB 13906 / BL2).